The primary structure comprises 386 residues: MATKKTTKAAPKGDDRQKALDAALALIEKDFGKGAVMRLGDENRPPIQVISSGNTALDIALGIGGFPRGRIVEVYGPESSGKTTVALHAIAQAQKAGGIAAFIDAEHALDPDYARKLGVDTDALLVSQPDTGEQALEIADMLVRSGAIDILVIDSVAALTPKAEIEGEMGDSHVGLQARLMSQALRKMTGALYNSGTTAIFINQLREKIGVMFGSPETTTGGKALKFYASVRIDVRRIQTLKDGQDAIGNRTRAKIVKNKVSPPFKIAEFDIIYGEGISRESSIIDLAVDNGIVKKSGSWFTYEGDQLGQGKEKARLFLKETPELADEIEEKIFRKLGVGKFAQTADELTDDPVELIPNVDFDDEDDDFDASTAPAGTFTEVTTEN.

Residue 76 to 83 coordinates ATP; it reads GPESSGKT. The disordered stretch occupies residues 362-386; sequence FDDEDDDFDASTAPAGTFTEVTTEN.

This sequence belongs to the RecA family.

Its subcellular location is the cytoplasm. Can catalyze the hydrolysis of ATP in the presence of single-stranded DNA, the ATP-dependent uptake of single-stranded DNA by duplex DNA, and the ATP-dependent hybridization of homologous single-stranded DNAs. It interacts with LexA causing its activation and leading to its autocatalytic cleavage. The sequence is that of Protein RecA from Corynebacterium efficiens (strain DSM 44549 / YS-314 / AJ 12310 / JCM 11189 / NBRC 100395).